The following is a 98-amino-acid chain: NADH-ubiquinone oxidoreductase chain 4L (98 aa).

3 consecutive transmembrane segments (helical) span residues 2–22 (PSIS…MLVF), 29–49 (SLLC…LFIM), and 61–81 (ILLL…LVMV).

Belongs to the complex I subunit 4L family. As to quaternary structure, core subunit of respiratory chain NADH dehydrogenase (Complex I) which is composed of 45 different subunits.

The protein localises to the mitochondrion inner membrane. It carries out the reaction a ubiquinone + NADH + 5 H(+)(in) = a ubiquinol + NAD(+) + 4 H(+)(out). Functionally, core subunit of the mitochondrial membrane respiratory chain NADH dehydrogenase (Complex I) which catalyzes electron transfer from NADH through the respiratory chain, using ubiquinone as an electron acceptor. Part of the enzyme membrane arm which is embedded in the lipid bilayer and involved in proton translocation. The chain is NADH-ubiquinone oxidoreductase chain 4L (MT-ND4L) from Lepilemur mitsinjoensis (Mitsinjo sportive lemur).